Consider the following 104-residue polypeptide: Cell cycle protein GpsB (104 aa).

A coiled-coil region spans residues 34 to 72 (LDVVIQDYEVFQKKIERLEQEIHQLRTEAKRAASERQTR). Over residues 60–71 (TEAKRAASERQT) the composition is skewed to basic and acidic residues. Residues 60 to 82 (TEAKRAASERQTRHQTSPSVGST) form a disordered region. The segment covering 73 to 82 (HQTSPSVGST) has biased composition (polar residues).

The protein belongs to the GpsB family. As to quaternary structure, forms polymers through the coiled coil domains. Interacts with PBP1, MreC and EzrA.

Its subcellular location is the cytoplasm. Divisome component that associates with the complex late in its assembly, after the Z-ring is formed, and is dependent on DivIC and PBP2B for its recruitment to the divisome. Together with EzrA, is a key component of the system that regulates PBP1 localization during cell cycle progression. Its main role could be the removal of PBP1 from the cell pole after pole maturation is completed. Also contributes to the recruitment of PBP1 to the division complex. Not essential for septum formation. This chain is Cell cycle protein GpsB, found in Halalkalibacterium halodurans (strain ATCC BAA-125 / DSM 18197 / FERM 7344 / JCM 9153 / C-125) (Bacillus halodurans).